The chain runs to 408 residues: S-adenosylmethionine synthase (408 aa).

An ATP-binding site is contributed by 140–145 (GQGSVD).

The protein belongs to the AdoMet synthase 2 family. Mg(2+) is required as a cofactor.

It carries out the reaction L-methionine + ATP + H2O = S-adenosyl-L-methionine + phosphate + diphosphate. It participates in amino-acid biosynthesis; S-adenosyl-L-methionine biosynthesis; S-adenosyl-L-methionine from L-methionine: step 1/1. Its function is as follows. Catalyzes the formation of S-adenosylmethionine from methionine and ATP. The protein is S-adenosylmethionine synthase of Caldivirga maquilingensis (strain ATCC 700844 / DSM 13496 / JCM 10307 / IC-167).